The primary structure comprises 358 residues: MFNSFGNIFRLTSFGESHGKGVGGVIDGFPSGITIDEEFVQQELNRRRPGQSILTTPRKEADKVEFLSGIFEGKSTGCPIGFIVWNENQHSNDYNNLKEVYRPSHADYTYKVKYGIRDHRGGGRSSARETISRVVAGALAKLALRQLGISITAYTSQVGAIKLEGTYSDYDLDLIETNDVRCPDPEKAKEMADLIYKVKGEGDTIGGTLTCVIKGCPIGLGQPVFGKLHAALGNAMLSINAAKAFEYGEGFKGLKMKGSEQNDVFFNNNGRIETHTNHSGGIQGGISNGQDIYFRVVFKPIATLLMEQETVNIDGVDTTLKARGRHDACVLPRAVPIVEAMAAMTILDYYLLDKTTQL.

Residue Arg47 participates in NADP(+) binding. FMN is bound by residues 124–126, 240–241, Gly284, 299–303, and Arg325; these read RSS, NA, and KPIAT.

Belongs to the chorismate synthase family. Homotetramer. It depends on FMNH2 as a cofactor.

It catalyses the reaction 5-O-(1-carboxyvinyl)-3-phosphoshikimate = chorismate + phosphate. It participates in metabolic intermediate biosynthesis; chorismate biosynthesis; chorismate from D-erythrose 4-phosphate and phosphoenolpyruvate: step 7/7. In terms of biological role, catalyzes the anti-1,4-elimination of the C-3 phosphate and the C-6 proR hydrogen from 5-enolpyruvylshikimate-3-phosphate (EPSP) to yield chorismate, which is the branch point compound that serves as the starting substrate for the three terminal pathways of aromatic amino acid biosynthesis. This reaction introduces a second double bond into the aromatic ring system. This chain is Chorismate synthase, found in Bacteroides thetaiotaomicron (strain ATCC 29148 / DSM 2079 / JCM 5827 / CCUG 10774 / NCTC 10582 / VPI-5482 / E50).